The primary structure comprises 255 residues: Bouquet formation protein 3 (255 aa).

Transmembrane regions (helical) follow at residues isoleucine 13 to leucine 33, isoleucine 48 to glutamine 68, leucine 72 to threonine 94, isoleucine 99 to phenylalanine 116, tyrosine 132 to isoleucine 152, serine 172 to isoleucine 192, serine 205 to phenylalanine 225, and valine 235 to leucine 255.

It localises to the endoplasmic reticulum membrane. The protein localises to the nucleus inner membrane. In terms of biological role, connects telomeres to the nuclear envelop (NE) during both vegetative growth and meiosis. This connection ensures clustering of telomeres to the spindle pole body (SPB) when cells enter meiotic prophase. The sequence is that of Bouquet formation protein 3 (bqt3) from Schizosaccharomyces pombe (strain 972 / ATCC 24843) (Fission yeast).